Here is a 197-residue protein sequence, read N- to C-terminus: Ribonuclease HII (197 aa).

In terms of domain architecture, RNase H type-2 spans 10–197 (ELIAGVDEVG…APVRKLLNTL (188 aa)). A divalent metal cation is bound by residues D16, E17, and D108.

It belongs to the RNase HII family. Requires Mn(2+) as cofactor. It depends on Mg(2+) as a cofactor.

The protein resides in the cytoplasm. It catalyses the reaction Endonucleolytic cleavage to 5'-phosphomonoester.. Its function is as follows. Endonuclease that specifically degrades the RNA of RNA-DNA hybrids. This chain is Ribonuclease HII (rnhB), found in Pasteurella multocida (strain Pm70).